A 468-amino-acid polypeptide reads, in one-letter code: Tissue alpha-L-fucosidase (468 aa).

Positions 1–29 (MRAPGERWRPAGAALWLLLLLLLLGATES) are cleaved as a signal peptide. At Thr172 the chain carries Phosphothreonine. 3 N-linked (GlcNAc...) asparagine glycosylation sites follow: Asn243, Asn270, and Asn384.

Belongs to the glycosyl hydrolase 29 family. In terms of assembly, homotetramer.

The protein localises to the lysosome. It catalyses the reaction an alpha-L-fucoside + H2O = L-fucose + an alcohol. The enzyme catalyses a neolactoside IV(2)-alpha-Fuc-nLc4Cer(d18:1(4E)) + H2O = a neolactoside nLc4Cer(d18:1(4E)) + L-fucose. The catalysed reaction is a neolactoside IV(2)-alpha-Fuc-nLc4Cer(d18:0) + H2O = a neolactoside nLc4Cer(d18:0) + L-fucose. Its function is as follows. Alpha-L-fucosidase is responsible for hydrolyzing the alpha-1,6-linked fucose joined to the reducing-end N-acetylglucosamine of the carbohydrate moieties of glycoproteins. The chain is Tissue alpha-L-fucosidase (FUCA1) from Macaca fascicularis (Crab-eating macaque).